The sequence spans 395 residues: Acetate kinase (395 aa).

Residue N10 participates in Mg(2+) binding. K17 serves as a coordination point for ATP. R87 serves as a coordination point for substrate. Residue D144 is the Proton donor/acceptor of the active site. ATP is bound by residues 204 to 208 (HLGNG), 279 to 281 (DMR), and 327 to 331 (GIGEN). E381 contacts Mg(2+).

The protein belongs to the acetokinase family. Homodimer. The cofactor is Mg(2+). Mn(2+) is required as a cofactor.

The protein resides in the cytoplasm. It carries out the reaction acetate + ATP = acetyl phosphate + ADP. The protein operates within metabolic intermediate biosynthesis; acetyl-CoA biosynthesis; acetyl-CoA from acetate: step 1/2. Functionally, catalyzes the formation of acetyl phosphate from acetate and ATP. Can also catalyze the reverse reaction. This is Acetate kinase from Stutzerimonas stutzeri (strain A1501) (Pseudomonas stutzeri).